A 538-amino-acid chain; its full sequence is Phosphatidylethanolamine transferase Mcr-2 (538 aa).

A run of 5 helical transmembrane segments spans residues 14-34, 47-67, 72-92, 121-141, and 161-181; these read PFVL…LTFF, LGFI…IVVL, YVLK…SYFT, LAFF…VAVA, and VSLV…ASFF. Glutamate 244 and threonine 283 together coordinate Zn(2+). 3 cysteine pairs are disulfide-bonded: cysteine 279-cysteine 289, cysteine 354-cysteine 362, and cysteine 412-cysteine 420. Phosphothreonine is present on threonine 283. Zn(2+) contacts are provided by aspartate 463 and histidine 464.

This sequence belongs to the phosphoethanolamine transferase family. In terms of assembly, monomer. Phosphorylated at Thr-283; may represent an intermediate in the catalytic mechanism.

The protein resides in the cell inner membrane. It catalyses the reaction lipid A (E. coli) + a 1,2-diacyl-sn-glycero-3-phosphoethanolamine + H(+) = lipid A 4'-(2-aminoethyl diphosphate) (E. coli) + a 1,2-diacyl-sn-glycerol. In terms of biological role, probably catalyzes the addition of a phosphoethanolamine moiety to lipid A. Phosphoethanolamine modification of lipid A confers polymyxin resistance. Confers resistance to polymyxin-type antibiotics such as colistin. The sequence is that of Phosphatidylethanolamine transferase Mcr-2 from Escherichia coli.